The chain runs to 272 residues: Putative MgpC-like protein MPN_102 (272 aa).

The protein belongs to the MgpC family.

The chain is Putative MgpC-like protein MPN_102 from Mycoplasma pneumoniae (strain ATCC 29342 / M129 / Subtype 1) (Mycoplasmoides pneumoniae).